Here is a 346-residue protein sequence, read N- to C-terminus: NADH-quinone oxidoreductase subunit H (346 aa).

9 helical membrane-spanning segments follow: residues 13-33 (ILLILLQCLLLVVPLLVALAF), 51-71 (PNVVGAFGLLQSFADFLKYIV), 83-103 (AVYFLAPIVSLVMALIAWAVI), 116-136 (VAVLYVFAVSSLEVYGVIMGG), 162-182 (IGLIIIGVIISTGSMNFTAIV), 191-211 (LLNWYFLPHFPMLFLFFISAL), 244-264 (FMIGELVAVVLMCALTVLLFF), 278-298 (VFWMILKMLAVFFMFSMVKAI), and 310-330 (LGWKVFLPFSLFWVVFVAFMA).

Belongs to the complex I subunit 1 family. As to quaternary structure, NDH-1 is composed of 14 different subunits. Subunits NuoA, H, J, K, L, M, N constitute the membrane sector of the complex.

It is found in the cell inner membrane. The catalysed reaction is a quinone + NADH + 5 H(+)(in) = a quinol + NAD(+) + 4 H(+)(out). NDH-1 shuttles electrons from NADH, via FMN and iron-sulfur (Fe-S) centers, to quinones in the respiratory chain. The immediate electron acceptor for the enzyme in this species is believed to be ubiquinone. Couples the redox reaction to proton translocation (for every two electrons transferred, four hydrogen ions are translocated across the cytoplasmic membrane), and thus conserves the redox energy in a proton gradient. This subunit may bind ubiquinone. In Jannaschia sp. (strain CCS1), this protein is NADH-quinone oxidoreductase subunit H.